The primary structure comprises 190 residues: Elongation factor P (190 aa).

The protein belongs to the elongation factor P family.

Its subcellular location is the cytoplasm. It functions in the pathway protein biosynthesis; polypeptide chain elongation. In terms of biological role, involved in peptide bond synthesis. Stimulates efficient translation and peptide-bond synthesis on native or reconstituted 70S ribosomes in vitro. Probably functions indirectly by altering the affinity of the ribosome for aminoacyl-tRNA, thus increasing their reactivity as acceptors for peptidyl transferase. This Pseudomonas fluorescens (strain SBW25) protein is Elongation factor P.